The sequence spans 433 residues: Elongation factor 1-alpha (433 aa).

The tr-type G domain maps to 5–227; sequence KPHLNLVVIG…AFDFFKEPPR (223 aa). Residues 14 to 21 are G1; that stretch reads GHIDHGKS. 14–21 contributes to the GTP binding site; sequence GHIDHGKS. S21 contacts Mg(2+). The tract at residues 70-74 is G2; the sequence is GITID. The G3 stretch occupies residues 91–94; that stretch reads DAPG. GTP contacts are provided by residues 91-95 and 153-156; these read DAPGH and NKMD. The tract at residues 153 to 156 is G4; the sequence is NKMD. Positions 192–194 are G5; sequence SAW.

It belongs to the TRAFAC class translation factor GTPase superfamily. Classic translation factor GTPase family. EF-Tu/EF-1A subfamily.

It is found in the cytoplasm. It catalyses the reaction GTP + H2O = GDP + phosphate + H(+). Its function is as follows. GTP hydrolase that promotes the GTP-dependent binding of aminoacyl-tRNA to the A-site of ribosomes during protein biosynthesis. The chain is Elongation factor 1-alpha from Thermofilum pendens (strain DSM 2475 / Hrk 5).